Consider the following 190-residue polypeptide: Guanylate kinase (190 aa).

One can recognise a Guanylate kinase-like domain in the interval 3-185 (NYIFIISAPS…SLEQLCKYFE (183 aa)). 10 to 17 (APSGAGKS) lines the ATP pocket.

It belongs to the guanylate kinase family.

It localises to the cytoplasm. The catalysed reaction is GMP + ATP = GDP + ADP. Essential for recycling GMP and indirectly, cGMP. The sequence is that of Guanylate kinase from Francisella tularensis subsp. holarctica (strain LVS).